We begin with the raw amino-acid sequence, 513 residues long: ATP synthase subunit alpha (513 aa).

169–176 (GDRQIGKT) contributes to the ATP binding site.

The protein belongs to the ATPase alpha/beta chains family. In terms of assembly, F-type ATPases have 2 components, CF(1) - the catalytic core - and CF(0) - the membrane proton channel. CF(1) has five subunits: alpha(3), beta(3), gamma(1), delta(1), epsilon(1). CF(0) has three main subunits: a(1), b(2) and c(9-12). The alpha and beta chains form an alternating ring which encloses part of the gamma chain. CF(1) is attached to CF(0) by a central stalk formed by the gamma and epsilon chains, while a peripheral stalk is formed by the delta and b chains.

The protein resides in the cell inner membrane. The catalysed reaction is ATP + H2O + 4 H(+)(in) = ADP + phosphate + 5 H(+)(out). Its function is as follows. Produces ATP from ADP in the presence of a proton gradient across the membrane. The alpha chain is a regulatory subunit. This chain is ATP synthase subunit alpha, found in Francisella tularensis subsp. holarctica (strain OSU18).